The chain runs to 437 residues: Adenylosuccinate synthetase (437 aa).

Residues 12-18 (GDEGKGK) and 40-42 (GHT) contribute to the GTP site. The active-site Proton acceptor is the Asp-13. Residues Asp-13 and Gly-40 each contribute to the Mg(2+) site. IMP-binding positions include 13–16 (DEGK), 38–41 (NAGH), Thr-128, Arg-142, Gln-223, Thr-238, and Arg-302. His-41 functions as the Proton donor in the catalytic mechanism. 298 to 304 (TTTGRKR) is a substrate binding site. GTP contacts are provided by residues Arg-304, 330–332 (KLD), and 412–414 (SLG).

This sequence belongs to the adenylosuccinate synthetase family. In terms of assembly, homodimer. The cofactor is Mg(2+).

Its subcellular location is the cytoplasm. It carries out the reaction IMP + L-aspartate + GTP = N(6)-(1,2-dicarboxyethyl)-AMP + GDP + phosphate + 2 H(+). It participates in purine metabolism; AMP biosynthesis via de novo pathway; AMP from IMP: step 1/2. Plays an important role in the de novo pathway of purine nucleotide biosynthesis. Catalyzes the first committed step in the biosynthesis of AMP from IMP. The protein is Adenylosuccinate synthetase of Trichodesmium erythraeum (strain IMS101).